The chain runs to 297 residues: Beta-1,3-galactosyltransferase 5 (297 aa).

At 1-7 the chain is on the cytoplasmic side; that stretch reads MAFPKMR. A helical; Signal-anchor for type II membrane protein membrane pass occupies residues 8-28; sequence LMYVCLLVLGALCVYFSMYSL. Over 29–297 the chain is Lumenal; the sequence is NLFKEQSFVY…KPRTLLDYWQ (269 aa). N-linked (GlcNAc...) asparagine glycans are attached at residues Asn130, Asn174, and Asn231.

Belongs to the glycosyltransferase 31 family.

The protein localises to the golgi apparatus membrane. It catalyses the reaction a globoside Gb4Cer (d18:1(4E)) + UDP-alpha-D-galactose = a globoside GalGb4Cer (d18:1(4E)) + UDP + H(+). The protein operates within protein modification; protein glycosylation. In terms of biological role, catalyzes the transfer of Gal to GlcNAc-based acceptors with a preference for the core3 O-linked glycan GlcNAc(beta1,3)GalNAc structure. Can use glycolipid LC3Cer as an efficient acceptor. The protein is Beta-1,3-galactosyltransferase 5 (B3GALT5) of Pan troglodytes (Chimpanzee).